A 363-amino-acid polypeptide reads, in one-letter code: Probable F-box protein At4g22165 (363 aa).

The F-box domain maps to 7–56; that stretch reads PNTWSELPLDLLNLVFKRLSLVNFQRAKSVCSTRYSVSRQCVPERQIALL.

This is Probable F-box protein At4g22165 from Arabidopsis thaliana (Mouse-ear cress).